We begin with the raw amino-acid sequence, 337 residues long: Protein MICROTUBULE BINDING PROTEIN 2C (337 aa).

The interval 80-147 (RGSMTYTKMP…STSSLTEKDR (68 aa)) is disordered. Basic and acidic residues predominate over residues 89–103 (PSRESLYKKTSEVKG). Over residues 120–142 (KNVSSSQDGYAENFSTPSSTSSL) the composition is skewed to polar residues. 3 coiled-coil regions span residues 143–194 (TEKD…MKKD), 223–250 (VEKL…LQGE), and 294–314 (LQKM…AKEN).

The protein belongs to the microtubule binding protein 2C family. Interacts with KN-1. Binds to tobacco mosaic virus movement protein (TMV-MP) at microtubules. As to expression, constitutively expressed in leaves.

The protein resides in the cytoplasm. It is found in the cytoskeleton. Functionally, prevents homeodomain proteins (e.g. STM) association to plasmodesmata and, consequently, cell-to-cell transport. Binds to RNA. Alters KN1 RNA-binding capacity. Regulates cytoskeleton (e.g. actin) organization that determinates cell shape. Interferes with cell-to-cell transport of tobacco mosaic virus movement protein (TMV-MP) by mediating its accumulation at microtubules, thus interfering with cell-to-cell virus movement. This is Protein MICROTUBULE BINDING PROTEIN 2C from Nicotiana tabacum (Common tobacco).